The chain runs to 169 residues: Centrin-1 (169 aa).

Positions Met-1–Glu-21 are essential for homooligomerization. Residues Met-1 to Glu-25 form a disordered region. 4 EF-hand domains span residues Glu-25–Glu-60, Pro-61–Glu-96, Asp-98–Asn-133, and Leu-134–Phe-169. Positions 38, 40, 42, 44, 49, 74, 76, 78, 80, and 85 each coordinate Ca(2+).

This sequence belongs to the centrin family. As to quaternary structure, monomer. Homooligomerizes in a Ca(2+)-dependent manner. Interaction via the C-terminus with other proteins disrupts and/or prevents homooligomerization. Interacts with SFI1.

The protein localises to the cytoplasm. The protein resides in the cytoskeleton. It is found in the microtubule organizing center. Its subcellular location is the centrosome. Its function is as follows. Acts as a calcium sensor. Part of the centrosome outer core complex. In Toxoplasma gondii (strain ATCC 50611 / Me49), this protein is Centrin-1.